The following is a 119-amino-acid chain: Large ribosomal subunit protein bL20 (119 aa).

This sequence belongs to the bacterial ribosomal protein bL20 family.

Functionally, binds directly to 23S ribosomal RNA and is necessary for the in vitro assembly process of the 50S ribosomal subunit. It is not involved in the protein synthesizing functions of that subunit. The chain is Large ribosomal subunit protein bL20 from Shewanella sediminis (strain HAW-EB3).